A 190-amino-acid polypeptide reads, in one-letter code: Dynein axonemal light chain 1 (190 aa).

4 LRR repeats span residues 49-70, 71-92, 94-115, and 116-137; these read VCEKLSLSTNCIEKIANLNGLK, NLKILSLGRNNIKNLNGLEAVG, SLEELWISYNSIEKLKGIHVLK, and KLKVLLMSNNQVKDWGEFNKLQ. Residues 150–190 enclose the LRRCT domain; that stretch reads NPLEEKHSAEGDWQDRVTKSLKALKKLDGTPIIKNDEEEED.

This sequence belongs to the dynein light chain LC1-type family. As to quaternary structure, interacts with DNAH5, a outer arm dynein heavy chain. Interacts with tubulin located within the A-tubule of the outer doublets in a ATP-independent manner.

It is found in the cytoplasm. Its subcellular location is the cytoskeleton. The protein resides in the cilium axoneme. Part of the multisubunit axonemal ATPase complexes that generate the force for cilia motility and govern beat frequency. Component of the outer arm dynein (ODA). May be involved in a mechanosensory feedback mechanism controlling ODA activity based on external conformational cues by tethering the outer arm dynein heavy chain (DNAH5) to the microtubule within the axoneme. The polypeptide is Dynein axonemal light chain 1 (DNAL1) (Ciona intestinalis (Transparent sea squirt)).